The sequence spans 213 residues: GTP-binding protein YPTC4 (213 aa).

Residue G13–C21 coordinates GTP. Positions H35–F43 match the Effector region motif. GTP is bound by residues D61–Q65, N119–D122, and S149–R151. Positions A194 to C213 are disordered. 2 S-geranylgeranyl cysteine lipidation sites follow: C212 and C213.

Belongs to the small GTPase superfamily. Rab family.

It localises to the cell membrane. Its function is as follows. Protein transport. Probably involved in vesicular traffic. The chain is GTP-binding protein YPTC4 (YPTC4) from Chlamydomonas reinhardtii (Chlamydomonas smithii).